A 149-amino-acid chain; its full sequence is Nucleoside diphosphate kinase (149 aa).

Residues K9, F57, R85, T91, R102, and N112 each coordinate ATP. H115 acts as the Pros-phosphohistidine intermediate in catalysis.

This sequence belongs to the NDK family. The cofactor is Mg(2+).

Its subcellular location is the cytoplasm. It catalyses the reaction a 2'-deoxyribonucleoside 5'-diphosphate + ATP = a 2'-deoxyribonucleoside 5'-triphosphate + ADP. It carries out the reaction a ribonucleoside 5'-diphosphate + ATP = a ribonucleoside 5'-triphosphate + ADP. Functionally, major role in the synthesis of nucleoside triphosphates other than ATP. The ATP gamma phosphate is transferred to the NDP beta phosphate via a ping-pong mechanism, using a phosphorylated active-site intermediate. In Methanosarcina acetivorans (strain ATCC 35395 / DSM 2834 / JCM 12185 / C2A), this protein is Nucleoside diphosphate kinase.